Here is a 435-residue protein sequence, read N- to C-terminus: U-box domain-containing protein 21 (435 aa).

In terms of domain architecture, U-box spans 30–104 (TIPPEFQCPI…QGWCVEKGSP (75 aa)). ARM repeat units follow at residues 202–241 (LEGI…EILS), 245–285 (TRVH…QMVL), 288–327 (PEIA…AICE), and 329–369 (EHGR…KLWK).

It catalyses the reaction S-ubiquitinyl-[E2 ubiquitin-conjugating enzyme]-L-cysteine + [acceptor protein]-L-lysine = [E2 ubiquitin-conjugating enzyme]-L-cysteine + N(6)-ubiquitinyl-[acceptor protein]-L-lysine.. The protein operates within protein modification; protein ubiquitination. Its function is as follows. Functions as an E3 ubiquitin ligase. This is U-box domain-containing protein 21 (PUB21) from Arabidopsis thaliana (Mouse-ear cress).